We begin with the raw amino-acid sequence, 55 residues long: Large ribosomal subunit protein bL33 (55 aa).

The span at 1-11 shows a compositional bias: basic and acidic residues; the sequence is MAKGGREKIKL. Residues 1 to 29 form a disordered region; the sequence is MAKGGREKIKLESSAGTGHFYTTSKNKRT. Over residues 14–24 the composition is skewed to polar residues; the sequence is SAGTGHFYTTS.

The protein belongs to the bacterial ribosomal protein bL33 family.

The sequence is that of Large ribosomal subunit protein bL33 from Polynucleobacter asymbioticus (strain DSM 18221 / CIP 109841 / QLW-P1DMWA-1) (Polynucleobacter necessarius subsp. asymbioticus).